The following is a 272-amino-acid chain: Pyrroline-5-carboxylate reductase 3 (272 aa).

It belongs to the pyrroline-5-carboxylate reductase family.

The protein localises to the cytoplasm. It catalyses the reaction L-proline + NADP(+) = (S)-1-pyrroline-5-carboxylate + NADPH + 2 H(+). It carries out the reaction L-proline + NAD(+) = (S)-1-pyrroline-5-carboxylate + NADH + 2 H(+). Its pathway is amino-acid biosynthesis; L-proline biosynthesis; L-proline from L-glutamate 5-semialdehyde: step 1/1. Functionally, catalyzes the reduction of 1-pyrroline-5-carboxylate (PCA) to L-proline. This Bacillus subtilis (strain 168) protein is Pyrroline-5-carboxylate reductase 3 (proG).